The chain runs to 245 residues: 1-(5-phosphoribosyl)-5-[(5-phosphoribosylamino)methylideneamino] imidazole-4-carboxamide isomerase (245 aa).

Asp-7 acts as the Proton acceptor in catalysis. The active-site Proton donor is the Asp-129.

Belongs to the HisA/HisF family.

The protein localises to the cytoplasm. It carries out the reaction 1-(5-phospho-beta-D-ribosyl)-5-[(5-phospho-beta-D-ribosylamino)methylideneamino]imidazole-4-carboxamide = 5-[(5-phospho-1-deoxy-D-ribulos-1-ylimino)methylamino]-1-(5-phospho-beta-D-ribosyl)imidazole-4-carboxamide. It functions in the pathway amino-acid biosynthesis; L-histidine biosynthesis; L-histidine from 5-phospho-alpha-D-ribose 1-diphosphate: step 4/9. In Vibrio campbellii (strain ATCC BAA-1116), this protein is 1-(5-phosphoribosyl)-5-[(5-phosphoribosylamino)methylideneamino] imidazole-4-carboxamide isomerase.